Here is an 88-residue protein sequence, read N- to C-terminus: UPF0298 protein BcerKBAB4_3759 (88 aa).

Belongs to the UPF0298 family.

The protein localises to the cytoplasm. The protein is UPF0298 protein BcerKBAB4_3759 of Bacillus mycoides (strain KBAB4) (Bacillus weihenstephanensis).